Reading from the N-terminus, the 1679-residue chain is Probable myosin heavy chain ECU04_1000 (1679 aa).

Polar residues predominate over residues 1–14; that stretch reads MEGTTNKDIGSGSS. Residues 1-22 are disordered; the sequence is MEGTTNKDIGSGSSRPGGEVSV. The region spanning 31 to 79 is the Myosin N-terminal SH3-like domain; the sequence is MEKKWVWAPSSKEAYVCGFVVKEEGDVLEIDCRGVIVRHKSCEVFRMNP. Residues 83-754 form the Myosin motor domain; that stretch reads DMVDDLAELS…VLADIEDMRD (672 aa). 176–183 provides a ligand contact to ATP; sequence GESGAGKT. The tract at residues 624–646 is actin-binding; it reads LASLMSELRRTNPHFVRCIIPNL. Residues 823–1644 are a coiled coil; sequence GEMKEKEAMI…SKMLEMKKKL (822 aa).

It belongs to the TRAFAC class myosin-kinesin ATPase superfamily. Myosin family.

Cellular myosin that appears to play a role in cytokinesis, cell shape, and specialized functions such as secretion and capping. This is Probable myosin heavy chain ECU04_1000 from Encephalitozoon cuniculi (strain GB-M1) (Microsporidian parasite).